The chain runs to 163 residues: SsrA-binding protein (163 aa).

Belongs to the SmpB family.

It is found in the cytoplasm. Its function is as follows. Required for rescue of stalled ribosomes mediated by trans-translation. Binds to transfer-messenger RNA (tmRNA), required for stable association of tmRNA with ribosomes. tmRNA and SmpB together mimic tRNA shape, replacing the anticodon stem-loop with SmpB. tmRNA is encoded by the ssrA gene; the 2 termini fold to resemble tRNA(Ala) and it encodes a 'tag peptide', a short internal open reading frame. During trans-translation Ala-aminoacylated tmRNA acts like a tRNA, entering the A-site of stalled ribosomes, displacing the stalled mRNA. The ribosome then switches to translate the ORF on the tmRNA; the nascent peptide is terminated with the 'tag peptide' encoded by the tmRNA and targeted for degradation. The ribosome is freed to recommence translation, which seems to be the essential function of trans-translation. This is SsrA-binding protein from Buchnera aphidicola subsp. Schizaphis graminum (strain Sg).